A 192-amino-acid chain; its full sequence is Phosphoheptose isomerase (192 aa).

Positions 35–192 (LIETLENQGK…CIERHFAHKN (158 aa)) constitute an SIS domain. Substrate is bound at residue 50 to 52 (NGG). Zn(2+)-binding residues include His59 and Glu63. Substrate contacts are provided by residues Glu63, 92–93 (ND), 118–120 (STS), Ser123, and Gln170. Gln170 and His178 together coordinate Zn(2+).

The protein belongs to the SIS family. GmhA subfamily. As to quaternary structure, homotetramer. The cofactor is Zn(2+).

The protein resides in the cytoplasm. The enzyme catalyses 2 D-sedoheptulose 7-phosphate = D-glycero-alpha-D-manno-heptose 7-phosphate + D-glycero-beta-D-manno-heptose 7-phosphate. It participates in carbohydrate biosynthesis; D-glycero-D-manno-heptose 7-phosphate biosynthesis; D-glycero-alpha-D-manno-heptose 7-phosphate and D-glycero-beta-D-manno-heptose 7-phosphate from sedoheptulose 7-phosphate: step 1/1. Functionally, catalyzes the isomerization of sedoheptulose 7-phosphate in D-glycero-D-manno-heptose 7-phosphate. This chain is Phosphoheptose isomerase, found in Helicobacter pylori (strain P12).